The chain runs to 393 residues: Protein TsgA (393 aa).

The next 12 membrane-spanning stretches (helical) occupy residues 11–31, 51–71, 78–98, 101–121, 134–154, 162–182, 206–226, 245–265, 273–293, 298–318, 332–352, and 361–381; these read WISF…GMVM, FLNA…EIVP, FGFI…SLAL, AAMF…TFLI, LLFT…VAAF, WYWV…LTFG, IGVL…LGFI, ALVS…SFIL, ILTV…TGTQ, WFIL…ITLG, FILT…GPIV, and LLTA…LGFV.

This sequence belongs to the major facilitator superfamily. TsgA family.

Its subcellular location is the cell inner membrane. This chain is Protein TsgA, found in Salmonella gallinarum (strain 287/91 / NCTC 13346).